Here is a 503-residue protein sequence, read N- to C-terminus: Dentin matrix acidic phosphoprotein 1 (503 aa).

Residues 1–16 (MKTVILLVFLWGLSCA) form the signal peptide. Residues 23–35 (HNTESESSEERTG) are compositionally biased toward basic and acidic residues. A disordered region spans residues 23 to 503 (HNTESESSEE…QDDNDCQDGY (481 aa)). Over residues 54–63 (QASPEGQANS) the composition is skewed to polar residues. A compositionally biased stretch (acidic residues) spans 98 to 119 (KEDDEDDSGDDTFGDEDNDLGP). Residues 138–150 (DTTQSSEDSTSQE) show a composition bias toward low complexity. The span at 158–175 (SDSKDHDSEDEADSRPEA) shows a compositional bias: basic and acidic residues. Over residues 203–215 (SEFDDEGMQSDDP) the composition is skewed to acidic residues. Composition is skewed to basic and acidic residues over residues 233–243 (RSEESKGDHEP), 267–286 (HVSE…RETQ), and 293–303 (TASKEESRSES). The segment covering 332–348 (EPSQESSSESQEGVTSE) has biased composition (low complexity). The short motif at 350–352 (RGD) is the Cell attachment site element. Asn-356 is a glycosylation site (N-linked (GlcNAc...) asparagine). Acidic residues predominate over residues 362 to 373 (DQEDSESSEEDS). Asn-394 carries an N-linked (GlcNAc...) asparagine glycan. Polar residues predominate over residues 407 to 418 (AQDGDSSSQEGL). Over residues 419-435 (QSQSASTESRSQESQSE) the composition is skewed to low complexity. Asn-457 carries an N-linked (GlcNAc...) asparagine glycan. Positions 467–492 (EDIRPKNMEADSRKLIVDAYHNKPIG) are enriched in basic and acidic residues. Residues 493–503 (DQDDNDCQDGY) are compositionally biased toward acidic residues.

Interacts with importin alpha. Phosphorylated in the cytosol and extracellular matrix and unphosphorylated in the nucleus. Phosphorylation is necessary for nucleocytoplasmic transport and may be catalyzed by a nuclear isoform of CK2 and can be augmented by calcium. Phosphorylated (in vitro) by FAM20C in the extracellular medium at sites within the S-x-E/pS motif. As to expression, expressed in tooth particularly in odontoblast, ameloblast and cementoblast. Also expressed in bone particularly in osteoblast.

The protein resides in the nucleus. It localises to the cytoplasm. The protein localises to the secreted. Its subcellular location is the extracellular space. It is found in the extracellular matrix. Its function is as follows. May have a dual function during osteoblast differentiation. In the nucleus of undifferentiated osteoblasts, unphosphorylated form acts as a transcriptional component for activation of osteoblast-specific genes like osteocalcin. During the osteoblast to osteocyte transition phase it is phosphorylated and exported into the extracellular matrix, where it regulates nucleation of hydroxyapatite. This chain is Dentin matrix acidic phosphoprotein 1, found in Mus musculus (Mouse).